Reading from the N-terminus, the 501-residue chain is MSSSGMPDLPAPLTNIKIQHTKLFINNEWHESVSGKTFPVFNPATEEKICEVEEADKEDVDKAVKAAREAFQMGSPWRTMDASERGQLIYKLADLIERDRLLLATLESINAGKVFASAYLMDLDYCIKALRYCAGWADKIQGRTIPVDGEFFSYTRHEPIGVCGLIFPWNAPMILLACKIGPALCCGNTVIVKPAEQTPLTALHVASLIKEAGFPPGVVNIVPGYGPTAGAAISSHMDVDKVAFTGSTEVGKMIQEAAAKSNLKRVTLELGAKNPCIVFADADLDSAVEFAHQGVFTNQGQSCIAASKLFVEEAIYDEFVQRSVERAKKYVFGNPLTPGVNHGPQINKAQHNKIMELIESGKKEGAKLECGGGPWGNKGYFIQPTVFSNVTDDMRIAKEEIFGPVQQIMKFKSLDEVIKRANNTYYGLVAGVFTKDLDKAVTVSSALQAGTVWVNCYLAASAQSPAGGFKMSGHGREMGEYGIHEYTEVKTVTMKISEKNS.

246–251 (GSTEVG) provides a ligand contact to NAD(+). The active-site Proton acceptor is glutamate 269. Catalysis depends on cysteine 303, which acts as the Nucleophile.

This sequence belongs to the aldehyde dehydrogenase family. In terms of assembly, homotetramer. Eye specific, with very high expression in the lens.

It localises to the cytoplasm. It catalyses the reaction an aldehyde + NAD(+) + H2O = a carboxylate + NADH + 2 H(+). Its pathway is alcohol metabolism; ethanol degradation; acetate from ethanol: step 2/2. In terms of biological role, major component of the eye of elephant shrews, which in contrast to other mammals, possesses both a lens- and a non-lens class-1 aldehyde dehydrogenase 1. This eye-specific form is a structural protein of the lens and, in other part of the eye, serves as the major form of ALDH1. Can convert/oxidize retinaldehyde to retinoic acid. In Elephantulus edwardii (Cape long-eared elephant shrew), this protein is Aldehyde dehydrogenase, cytosolic 1 (ALDH1).